The following is a 235-amino-acid chain: Large ribosomal subunit protein uL1 (235 aa).

Residues 1–22 (MSKNSKAYRAAAEKVDRSNPYT) form a disordered region.

It belongs to the universal ribosomal protein uL1 family. In terms of assembly, part of the 50S ribosomal subunit.

In terms of biological role, binds directly to 23S rRNA. The L1 stalk is quite mobile in the ribosome, and is involved in E site tRNA release. Functionally, protein L1 is also a translational repressor protein, it controls the translation of the L11 operon by binding to its mRNA. The sequence is that of Large ribosomal subunit protein uL1 from Mycobacterium ulcerans (strain Agy99).